The chain runs to 122 residues: Small ribosomal subunit protein uS13 (122 aa).

A disordered region spans residues 99 to 122 (RGQRTHTNARTRKGPAKAIAGKKK).

This sequence belongs to the universal ribosomal protein uS13 family. As to quaternary structure, part of the 30S ribosomal subunit. Forms a loose heterodimer with protein S19. Forms two bridges to the 50S subunit in the 70S ribosome.

Located at the top of the head of the 30S subunit, it contacts several helices of the 16S rRNA. In the 70S ribosome it contacts the 23S rRNA (bridge B1a) and protein L5 of the 50S subunit (bridge B1b), connecting the 2 subunits; these bridges are implicated in subunit movement. Contacts the tRNAs in the A and P-sites. The protein is Small ribosomal subunit protein uS13 of Rhodopseudomonas palustris (strain BisA53).